Here is a 514-residue protein sequence, read N- to C-terminus: Cytochrome P450 monooxygenase MO6277 (514 aa).

A helical membrane pass occupies residues 6-26; it reads LTVLALLGGTLLLYCSGLVIY. Residue Cys-457 participates in heme binding.

The protein belongs to the cytochrome P450 family. It depends on heme as a cofactor.

The protein resides in the membrane. The catalysed reaction is polyporic acid + reduced [NADPH--hemoprotein reductase] + O2 = ascocorynin + oxidized [NADPH--hemoprotein reductase] + H2O + H(+). The protein operates within secondary metabolite biosynthesis. Functionally, cytochrome P450 monooxygenase that hydroxylates polyporic acid produced by the nonribosomal peptide synthetase acyN to produce the less toxic metabolite ascocorynin. The hydrophobic substrate polyporic acid might approach the active site from the membrane and, after hydroxylation into ascocorynin, leaves into the cytoplasm. MO6277 appears vital to avoid high-level accumulation of polyporic acid in the fungal membrane. This Ascocoryne sarcoides (Purple jellydisc fungus) protein is Cytochrome P450 monooxygenase MO6277.